A 354-amino-acid chain; its full sequence is tRNA-specific 2-thiouridylase MnmA (354 aa).

ATP contacts are provided by residues 6–13 (LLSGGVDS) and Leu33. Cys100 serves as the catalytic Nucleophile. A disulfide bridge connects residues Cys100 and Cys195. Residue Gly123 coordinates ATP. An interaction with tRNA region spans residues 145-147 (KDQ). The active-site Cysteine persulfide intermediate is the Cys195.

It belongs to the MnmA/TRMU family.

The protein resides in the cytoplasm. It catalyses the reaction S-sulfanyl-L-cysteinyl-[protein] + uridine(34) in tRNA + AH2 + ATP = 2-thiouridine(34) in tRNA + L-cysteinyl-[protein] + A + AMP + diphosphate + H(+). Its function is as follows. Catalyzes the 2-thiolation of uridine at the wobble position (U34) of tRNA, leading to the formation of s(2)U34. This is tRNA-specific 2-thiouridylase MnmA from Borrelia duttonii (strain Ly).